A 754-amino-acid chain; its full sequence is 5-methyltetrahydropteroyltriglutamate--homocysteine methyltransferase (754 aa).

Residues 17-20 (RELK) and lysine 117 each bind 5-methyltetrahydropteroyltri-L-glutamate. Residues 431-433 (IGS) and glutamate 484 each bind L-homocysteine. L-methionine is bound by residues 431 to 433 (IGS) and glutamate 484. Residues 515–516 (RC) and tryptophan 561 contribute to the 5-methyltetrahydropteroyltri-L-glutamate site. Aspartate 599 serves as a coordination point for L-homocysteine. Residue aspartate 599 participates in L-methionine binding. Glutamate 605 is a binding site for 5-methyltetrahydropteroyltri-L-glutamate. Residues histidine 641, cysteine 643, and glutamate 665 each coordinate Zn(2+). Catalysis depends on histidine 694, which acts as the Proton donor. A Zn(2+)-binding site is contributed by cysteine 726.

Belongs to the vitamin-B12 independent methionine synthase family. Zn(2+) serves as cofactor.

The enzyme catalyses 5-methyltetrahydropteroyltri-L-glutamate + L-homocysteine = tetrahydropteroyltri-L-glutamate + L-methionine. The protein operates within amino-acid biosynthesis; L-methionine biosynthesis via de novo pathway; L-methionine from L-homocysteine (MetE route): step 1/1. Functionally, catalyzes the transfer of a methyl group from 5-methyltetrahydrofolate to homocysteine resulting in methionine formation. This is 5-methyltetrahydropteroyltriglutamate--homocysteine methyltransferase from Salmonella newport (strain SL254).